We begin with the raw amino-acid sequence, 504 residues long: Beta-glucosidase 24 (504 aa).

An N-terminal signal peptide occupies residues 1–18 (MELLWLLLLLLMASSTSS). Gln-47 is an a beta-D-glucoside binding site. A glycan (N-linked (GlcNAc...) asparagine) is linked at Asn-75. Residues His-151 and 196-197 (NE) contribute to the a beta-D-glucoside site. The active-site Proton donor is the Glu-197. An intrachain disulfide couples Cys-216 to Cys-224. The N-linked (GlcNAc...) asparagine glycan is linked to Asn-329. Tyr-340 provides a ligand contact to a beta-D-glucoside. An N-linked (GlcNAc...) asparagine glycan is attached at Asn-371. Residue Glu-411 participates in a beta-D-glucoside binding. Glu-411 (nucleophile) is an active-site residue. N-linked (GlcNAc...) asparagine glycosylation is present at Asn-421. Residues Trp-460, 467 to 468 (EW), and Phe-476 each bind a beta-D-glucoside.

This sequence belongs to the glycosyl hydrolase 1 family.

It catalyses the reaction Hydrolysis of terminal, non-reducing beta-D-glucosyl residues with release of beta-D-glucose.. The chain is Beta-glucosidase 24 (BGLU24) from Oryza sativa subsp. japonica (Rice).